Reading from the N-terminus, the 418-residue chain is MSRPDDIDVRPIAEAETADWIRALNTGFLRSPEVSEREVADRSSYLVPARTLGAFDNGRCVATFRSFPQELTAVGGASVPADAISNVTVTATHRRRGLLTRMMAQDLAAAKERGDVVATLIAAEYPIYGRYGFGAATHSTEWTIDVPRTGLDPRWSGPGDGGRIDLVDGEDVRKAGPELHERLRRTQPGAVSRDERWWQVHTGVVRLDRSPWTEPFYAVYRSASGEVEGLVSYECDDHWGDAKQPQNTAKVNWLIATTPAAERALWHYLCSIDWITKVRTGWRAPDDLLPHFLPDPRAARVTTHADWLWVRILDVVRALEARTYDGSGTLVLDVVDRHGLAGGRYRLTVGPDGAVCEPTTRDAGLTLDVGELAALWLGDASAVRLAALGRVREQQEGAASVADALLRTSGRPWCPDMF.

The N-acetyltransferase domain maps to 7–158; it reads IDVRPIAEAE…TGLDPRWSGP (152 aa). Residues 87 to 89 and 95 to 100 contribute to the acetyl-CoA site; these read VTV and RRGLLT. The active-site Proton donor is Tyr-128. Phe-418 acts as the Proton acceptor; via carboxylate in catalysis.

This sequence belongs to the acetyltransferase Eis family. As to quaternary structure, homohexamer; trimer of dimers.

This is an uncharacterized protein from Streptomyces avermitilis (strain ATCC 31267 / DSM 46492 / JCM 5070 / NBRC 14893 / NCIMB 12804 / NRRL 8165 / MA-4680).